The chain runs to 104 residues: Small ribosomal subunit protein bS18 (104 aa).

The span at 1-14 (MMNNEHDNFQKEVE) shows a compositional bias: basic and acidic residues. The segment at 1–25 (MMNNEHDNFQKEVETTTETTFNREE) is disordered.

It belongs to the bacterial ribosomal protein bS18 family. In terms of assembly, part of the 30S ribosomal subunit. Forms a tight heterodimer with protein bS6.

In terms of biological role, binds as a heterodimer with protein bS6 to the central domain of the 16S rRNA, where it helps stabilize the platform of the 30S subunit. The chain is Small ribosomal subunit protein bS18 from Mycoplasma pneumoniae (strain ATCC 29342 / M129 / Subtype 1) (Mycoplasmoides pneumoniae).